A 291-amino-acid chain; its full sequence is Fructose-1,6-bisphosphatase class 1 1 (291 aa).

Residues Glu78, Asp95, Leu97, and Asp98 each contribute to the Mg(2+) site. Residues 98 to 101 (DGSS), Tyr203, and Lys233 contribute to the substrate site. Glu239 lines the Mg(2+) pocket.

The protein belongs to the FBPase class 1 family. As to quaternary structure, homotetramer. It depends on Mg(2+) as a cofactor.

Its subcellular location is the cytoplasm. The enzyme catalyses beta-D-fructose 1,6-bisphosphate + H2O = beta-D-fructose 6-phosphate + phosphate. It functions in the pathway carbohydrate biosynthesis; gluconeogenesis. The polypeptide is Fructose-1,6-bisphosphatase class 1 1 (Haloarcula marismortui (strain ATCC 43049 / DSM 3752 / JCM 8966 / VKM B-1809) (Halobacterium marismortui)).